Here is a 399-residue protein sequence, read N- to C-terminus: Elongation factor Tu (399 aa).

Residues 10–209 (KPHVNIGTIG…AVDEYIPTPE (200 aa)) enclose the tr-type G domain. A G1 region spans residues 19 to 26 (GHVDHGKT). 19 to 26 (GHVDHGKT) is a binding site for GTP. Thr-26 serves as a coordination point for Mg(2+). Residues 60–64 (GITIN) are G2. Positions 81 to 84 (DCPG) are G3. GTP-binding positions include 81 to 85 (DCPGH) and 136 to 139 (NKMD). Residues 136 to 139 (NKMD) are G4. Residues 174–176 (SAL) form a G5 region.

Belongs to the TRAFAC class translation factor GTPase superfamily. Classic translation factor GTPase family. EF-Tu/EF-1A subfamily. In terms of assembly, monomer.

It localises to the cytoplasm. It catalyses the reaction GTP + H2O = GDP + phosphate + H(+). GTP hydrolase that promotes the GTP-dependent binding of aminoacyl-tRNA to the A-site of ribosomes during protein biosynthesis. This Nautilia profundicola (strain ATCC BAA-1463 / DSM 18972 / AmH) protein is Elongation factor Tu.